Here is a 296-residue protein sequence, read N- to C-terminus: Small ribosomal subunit protein uS2m (296 aa).

Residues 274-296 (QGQKEPGDQGPAHPPGADMSHSL) are disordered.

It belongs to the universal ribosomal protein uS2 family. Component of the mitochondrial small ribosomal subunit (mt-SSU). Mature mammalian 55S mitochondrial ribosomes consist of a small (28S) and a large (39S) subunit. The 28S small subunit contains a 12S ribosomal RNA (12S mt-rRNA) and 30 different proteins. The 39S large subunit contains a 16S rRNA (16S mt-rRNA), a copy of mitochondrial valine transfer RNA (mt-tRNA(Val)), which plays an integral structural role, and 52 different proteins.

The protein resides in the mitochondrion. In terms of biological role, required for mitoribosome formation and stability, and mitochondrial translation. The polypeptide is Small ribosomal subunit protein uS2m (MRPS2) (Homo sapiens (Human)).